The chain runs to 401 residues: MEPGRRGAAALLALLCVACALRAGRAQYERYSFRSFPRDELMPLESAYRHALDKYSGEHWAESVGYLEISLRLHRLLRDSEAFCHRNCSAAPQPEPAAGLASYPELRLFGGLLRRAHCLKRCKQGLPAFRQSQPSREVLADFQRREPYKFLQFAYFKANNLPKAIAAAHTFLLKHPDDEMMKRNMAYYKSLPGAEDYIKDLETKSYESLFIRAVRAYNGENWRTSITDMELALPDFFKAFYECLAACEGSREIKDFKDFYLSIADHYVEVLECKIQCEENLTPVIGGYPVEKFVATMYHYLQFAYYKLNDLKNAAPCAVSYLLFDQNDKVMQQNLVYYQYHRDTWGLSDEHFQPRPEAVQFFNVTTLQKELYDFAKENIMDDDEGEVVEYVDDLLELEETS.

Positions 1–26 are cleaved as a signal peptide; it reads MEPGRRGAAALLALLCVACALRAGRA. N-linked (GlcNAc...) asparagine glycosylation is found at Asn-87 and Asn-363.

It belongs to the leprecan family. In terms of tissue distribution, found in articular chondrocytes. Expressed in a variety of tissues.

The protein localises to the secreted. It localises to the extracellular space. The protein resides in the extracellular matrix. Necessary for efficient 3-hydroxylation of fibrillar collagen prolyl residues. This chain is Cartilage-associated protein (CRTAP), found in Homo sapiens (Human).